A 183-amino-acid polypeptide reads, in one-letter code: Phosphinothricin N-acetyltransferase (183 aa).

An N-acetyltransferase domain is found at 8-173; it reads ADIRRATEAD…WQLDFSLPVP (166 aa). Residues 91–93, 99–104, and asparagine 130 each bind acetyl-CoA; these read VYV and RTGLGS.

It belongs to the acetyltransferase family. PAT/BAR subfamily.

It carries out the reaction phosphinothricin + acetyl-CoA = N-acetylphosphinothricin + CoA + H(+). Functionally, inactivates phosphinothricin (PPT) by transfer of an acetyl group from acetyl CoA. Can also acetylate demethylphosphinothricin but not PTT or glutamate. This enzyme is an effector of phosphinothricin tripeptide (PTT or bialaphos) resistance. The chain is Phosphinothricin N-acetyltransferase from Streptomyces hygroscopicus.